Reading from the N-terminus, the 330-residue chain is Probable deoxyhypusine synthase (330 aa).

A disordered region spans residues 1-25; sequence MTGDDADETHENVVPGSDEDLDTPD. The active-site Nucleophile is the Lys-298.

Belongs to the deoxyhypusine synthase family. The cofactor is NAD(+).

The enzyme catalyses [eIF5A protein]-L-lysine + spermidine = [eIF5A protein]-deoxyhypusine + propane-1,3-diamine. It functions in the pathway protein modification; eIF5A hypusination. Catalyzes the NAD-dependent oxidative cleavage of spermidine and the subsequent transfer of the butylamine moiety of spermidine to the epsilon-amino group of a specific lysine residue of the eIF-5A precursor protein to form the intermediate deoxyhypusine residue. The polypeptide is Probable deoxyhypusine synthase (Halobacterium salinarum (strain ATCC 29341 / DSM 671 / R1)).